The sequence spans 146 residues: Large ribosomal subunit protein bL21 (146 aa).

The interval 117–146 (ITIGKSAPKSSSKKETVKKETKPKSEKSTN) is disordered. Over residues 128–146 (SKKETVKKETKPKSEKSTN) the composition is skewed to basic and acidic residues.

Belongs to the bacterial ribosomal protein bL21 family. Part of the 50S ribosomal subunit. Contacts protein L20.

In terms of biological role, this protein binds to 23S rRNA in the presence of protein L20. The polypeptide is Large ribosomal subunit protein bL21 (Prochlorococcus marinus (strain MIT 9301)).